The following is a 396-amino-acid chain: Tryptophan synthase beta chain (396 aa).

K88 bears the N6-(pyridoxal phosphate)lysine mark.

Belongs to the TrpB family. Tetramer of two alpha and two beta chains. Pyridoxal 5'-phosphate serves as cofactor.

The catalysed reaction is (1S,2R)-1-C-(indol-3-yl)glycerol 3-phosphate + L-serine = D-glyceraldehyde 3-phosphate + L-tryptophan + H2O. The protein operates within amino-acid biosynthesis; L-tryptophan biosynthesis; L-tryptophan from chorismate: step 5/5. Functionally, the beta subunit is responsible for the synthesis of L-tryptophan from indole and L-serine. This Leptospira biflexa serovar Patoc (strain Patoc 1 / Ames) protein is Tryptophan synthase beta chain.